A 311-amino-acid chain; its full sequence is Coproporphyrin III ferrochelatase (311 aa).

Fe-coproporphyrin III contacts are provided by residues tyrosine 12, arginine 29, 45 to 46 (RY), serine 53, and tyrosine 124. Fe(2+) contacts are provided by histidine 182 and glutamate 263.

Belongs to the ferrochelatase family.

It is found in the cytoplasm. The enzyme catalyses Fe-coproporphyrin III + 2 H(+) = coproporphyrin III + Fe(2+). The protein operates within porphyrin-containing compound metabolism; protoheme biosynthesis. In terms of biological role, involved in coproporphyrin-dependent heme b biosynthesis. Catalyzes the insertion of ferrous iron into coproporphyrin III to form Fe-coproporphyrin III. The sequence is that of Coproporphyrin III ferrochelatase from Bacillus mycoides (strain KBAB4) (Bacillus weihenstephanensis).